We begin with the raw amino-acid sequence, 67 residues long: UPF0337 protein msl9551 (67 aa).

This sequence belongs to the UPF0337 (CsbD) family.

This is UPF0337 protein msl9551 from Mesorhizobium japonicum (strain LMG 29417 / CECT 9101 / MAFF 303099) (Mesorhizobium loti (strain MAFF 303099)).